Reading from the N-terminus, the 316-residue chain is Putative ring-cleaving dioxygenase MhqA (316 aa).

2 VOC domains span residues 5–131 (GIHH…LTAD) and 154–278 (GLGP…LSTD). Residues His-8, His-226, and Glu-274 each contribute to the Fe cation site.

It belongs to the extradiol ring-cleavage dioxygenase family. The cofactor is Fe(2+).

It localises to the cytoplasm. Its function is as follows. Putative ring-cleavage dioxygenase that may contribute to the degradation of aromatic compounds. This chain is Putative ring-cleaving dioxygenase MhqA (mhqA), found in Bacillus subtilis (strain 168).